A 119-amino-acid polypeptide reads, in one-letter code: Large ribosomal subunit protein bL20c (119 aa).

The protein belongs to the bacterial ribosomal protein bL20 family.

The protein localises to the plastid. Its subcellular location is the chloroplast. Functionally, binds directly to 23S ribosomal RNA and is necessary for the in vitro assembly process of the 50S ribosomal subunit. It is not involved in the protein synthesizing functions of that subunit. This is Large ribosomal subunit protein bL20c from Saccharum hybrid (Sugarcane).